The primary structure comprises 279 residues: Eukaryotic translation initiation factor 3 subunit J (279 aa).

2 disordered regions span residues 1–74 (MSWD…SQKS) and 229–279 (ERQA…DDFM). Over residues 20 to 39 (WEDEDNDDPLLESWDIDEEE) the composition is skewed to acidic residues. Positions 34 to 74 (DIDEEEVARKKKEEEAKKKAEKEALKQKQQEAKNKKLSQKS) form a coiled coil. The segment covering 40–67 (VARKKKEEEAKKKAEKEALKQKQQEAKN) has biased composition (basic and acidic residues). The segment covering 268 to 279 (DDFDDFDDDDFM) has biased composition (acidic residues).

This sequence belongs to the eIF-3 subunit J family. As to quaternary structure, component of the eukaryotic translation initiation factor 3 (eIF-3) complex.

The protein resides in the cytoplasm. Its function is as follows. Component of the eukaryotic translation initiation factor 3 (eIF-3) complex, which is involved in protein synthesis of a specialized repertoire of mRNAs and, together with other initiation factors, stimulates binding of mRNA and methionyl-tRNAi to the 40S ribosome. The eIF-3 complex specifically targets and initiates translation of a subset of mRNAs involved in cell proliferation. This is Eukaryotic translation initiation factor 3 subunit J from Meyerozyma guilliermondii (strain ATCC 6260 / CBS 566 / DSM 6381 / JCM 1539 / NBRC 10279 / NRRL Y-324) (Yeast).